We begin with the raw amino-acid sequence, 456 residues long: Bifunctional protein GlmU (456 aa).

Residues 1–228 (MPQNTLNIVI…SYLAAGVNNK (228 aa)) form a pyrophosphorylase region. UDP-N-acetyl-alpha-D-glucosamine contacts are provided by residues 11–14 (LAAG), K25, Q75, 80–81 (GT), 102–104 (YGD), G138, E153, N168, and N226. Residue D104 participates in Mg(2+) binding. N226 is a binding site for Mg(2+). The interval 229 to 249 (LQLAELERIFQTEQAQELLKA) is linker. The segment at 250–456 (GVTLSDPARF…GWVRPEKDKQ (207 aa)) is N-acetyltransferase. R332 and K350 together coordinate UDP-N-acetyl-alpha-D-glucosamine. The active-site Proton acceptor is H362. UDP-N-acetyl-alpha-D-glucosamine contacts are provided by Y365 and N376. Acetyl-CoA-binding positions include A379, 385 to 386 (NY), S404, A422, and R439.

In the N-terminal section; belongs to the N-acetylglucosamine-1-phosphate uridyltransferase family. It in the C-terminal section; belongs to the transferase hexapeptide repeat family. As to quaternary structure, homotrimer. Mg(2+) serves as cofactor.

Its subcellular location is the cytoplasm. The catalysed reaction is alpha-D-glucosamine 1-phosphate + acetyl-CoA = N-acetyl-alpha-D-glucosamine 1-phosphate + CoA + H(+). The enzyme catalyses N-acetyl-alpha-D-glucosamine 1-phosphate + UTP + H(+) = UDP-N-acetyl-alpha-D-glucosamine + diphosphate. It participates in nucleotide-sugar biosynthesis; UDP-N-acetyl-alpha-D-glucosamine biosynthesis; N-acetyl-alpha-D-glucosamine 1-phosphate from alpha-D-glucosamine 6-phosphate (route II): step 2/2. The protein operates within nucleotide-sugar biosynthesis; UDP-N-acetyl-alpha-D-glucosamine biosynthesis; UDP-N-acetyl-alpha-D-glucosamine from N-acetyl-alpha-D-glucosamine 1-phosphate: step 1/1. It functions in the pathway bacterial outer membrane biogenesis; LPS lipid A biosynthesis. In terms of biological role, catalyzes the last two sequential reactions in the de novo biosynthetic pathway for UDP-N-acetylglucosamine (UDP-GlcNAc). The C-terminal domain catalyzes the transfer of acetyl group from acetyl coenzyme A to glucosamine-1-phosphate (GlcN-1-P) to produce N-acetylglucosamine-1-phosphate (GlcNAc-1-P), which is converted into UDP-GlcNAc by the transfer of uridine 5-monophosphate (from uridine 5-triphosphate), a reaction catalyzed by the N-terminal domain. In Neisseria meningitidis serogroup C / serotype 2a (strain ATCC 700532 / DSM 15464 / FAM18), this protein is Bifunctional protein GlmU.